Reading from the N-terminus, the 88-residue chain is Large ribosomal subunit protein bL27 (88 aa).

It belongs to the bacterial ribosomal protein bL27 family.

The protein is Large ribosomal subunit protein bL27 of Carboxydothermus hydrogenoformans (strain ATCC BAA-161 / DSM 6008 / Z-2901).